The sequence spans 232 residues: Vesicle transport through interaction with t-SNAREs homolog 1B (232 aa).

At Ala-2 the chain carries N-acetylalanine. 2 interaction with CLINT1 regions span residues 2 to 23 (ATSA…GLHE) and 69 to 73 (APLSF). At 2–208 (ATSAASSEHF…SRKVTTNKLL (207 aa)) the chain is on the cytoplasmic side. Positions 35–98 (MAGTEEKKKL…AKLHREVRST (64 aa)) form a coiled coil. Residue Thr-103 is modified to Phosphothreonine. Position 107 is an omega-N-methylarginine (Arg-107). Phosphoserine is present on Ser-138. Positions 161–198 (SEIIEELGEQRDQLERTKSRLVNTSENLSKSRKILRSM) form a coiled coil. Residues 209-229 (LSIVILLELAILGGLVYYKFL) traverse the membrane as a helical; Anchor for type IV membrane protein segment. At 230 to 232 (RRH) the chain is on the vesicular side.

This sequence belongs to the VTI1 family. In terms of assembly, forms a SNARE complex with STX7, STX8 and VAMP8 which functions in the homotypic fusion of late endosomes. Component of the SNARE complex composed of STX7, STX8, VAMP7 and VIT1B that is required for heterotypic fusion of late endosomes with lysosomes. May interact with STX17. Interacts with CLINT1.

The protein localises to the early endosome membrane. It localises to the late endosome membrane. It is found in the lysosome membrane. Its subcellular location is the cytoplasmic granule. The protein resides in the recycling endosome membrane. Functionally, V-SNARE that mediates vesicle transport pathways through interactions with t-SNAREs on the target membrane. These interactions are proposed to mediate aspects of the specificity of vesicle trafficking and to promote fusion of the lipid bilayers. May be concerned with increased secretion of cytokines associated with cellular senescence. This is Vesicle transport through interaction with t-SNAREs homolog 1B (VTI1B) from Bos taurus (Bovine).